The chain runs to 199 residues: Recombination protein RecR (199 aa).

A C4-type zinc finger spans residues 56–71 (CAICGNVSEKETCGIC). The Toprim domain maps to 79–174 (ATICVVEEAK…RVTRLASGLP (96 aa)).

This sequence belongs to the RecR family.

In terms of biological role, may play a role in DNA repair. It seems to be involved in an RecBC-independent recombinational process of DNA repair. It may act with RecF and RecO. This is Recombination protein RecR from Clavibacter michiganensis subsp. michiganensis (strain NCPPB 382).